The sequence spans 34 residues: Photosystem II reaction center protein Y (34 aa).

The Lumenal portion of the chain corresponds to 1–4; sequence MDIR. The helical transmembrane segment at 5 to 23 threads the bilayer; that stretch reads LLIVLLPVLAAASWALYNI. Residues 24–34 lie on the Stromal side of the membrane; the sequence is GRVALQQFRSM.

The protein belongs to the PsbY family. PSII is composed of 1 copy each of membrane proteins PsbA, PsbB, PsbC, PsbD, PsbE, PsbF, PsbH, PsbI, PsbJ, PsbK, PsbL, PsbM, PsbT, PsbX, PsbY, PsbZ, Psb30/Ycf12, at least 3 peripheral proteins of the oxygen-evolving complex and a large number of cofactors. It forms dimeric complexes.

It localises to the plastid. It is found in the chloroplast thylakoid membrane. Functionally, loosely associated component of the core of photosystem II (PSII), it is not always seen in crystals. PSII is a light-driven water plastoquinone oxidoreductase, using light energy to abstract electrons from H(2)O, generating a proton gradient subsequently used for ATP formation. The protein is Photosystem II reaction center protein Y of Gracilaria tenuistipitata var. liui (Red alga).